Consider the following 632-residue polypeptide: Signal-transduction and transcriptional-control protein (632 aa).

One can recognise a PAS domain in the interval 197-270; sequence TYQYLNKITD…GQSYEDEEIM (74 aa). The region spanning 324-554 is the Sigma-54 factor interaction domain; sequence IIGQSEAMKR…LENCIENIVN (231 aa). ATP-binding positions include 352–359 and 416–425; these read GESGTGKE and ANEGTLFLDE. Residues 606-625 constitute a DNA-binding region (H-T-H motif); sequence ISKACRILGINRSTLYIKIK.

This Clostridium beijerinckii (Clostridium MP) protein is Signal-transduction and transcriptional-control protein (stc).